We begin with the raw amino-acid sequence, 402 residues long: Tyrosine-protein kinase transforming protein ros (402 aa).

In terms of domain architecture, Protein kinase spans L98 to L377. ATP contacts are provided by residues L104–V112 and K133. D232 acts as the Proton acceptor in catalysis. Residue Y268 is modified to Phosphotyrosine; by autocatalysis.

The protein belongs to the protein kinase superfamily. Tyr protein kinase family. Insulin receptor subfamily.

The catalysed reaction is L-tyrosyl-[protein] + ATP = O-phospho-L-tyrosyl-[protein] + ADP + H(+). This is Tyrosine-protein kinase transforming protein ros (V-ROS) from Galliformes (UR2SV).